A 500-amino-acid chain; its full sequence is Cytochrome P450 726A27 (500 aa).

A helical; Signal-anchor for type II membrane protein transmembrane segment spans residues 7-27 (IPSYPIIFSFFIFIFMLIKIW). Cys-440 contributes to the heme binding site.

The protein belongs to the cytochrome P450 family. It depends on heme as a cofactor. As to expression, expressed in mature seeds.

The protein resides in the membrane. The enzyme catalyses (-)-casbene + reduced [NADPH--hemoprotein reductase] + O2 = 4-hydroxycasbene + oxidized [NADPH--hemoprotein reductase] + H2O + H(+). It carries out the reaction 8-hydroxycasbene + reduced [NADPH--hemoprotein reductase] + O2 = 4,8-dihydroxycasbene + oxidized [NADPH--hemoprotein reductase] + H2O + H(+). The catalysed reaction is 4,8-dihydroxycasbene + reduced [NADPH--hemoprotein reductase] + O2 = 4,5,8-trihydroxycasbene + oxidized [NADPH--hemoprotein reductase] + H2O + H(+). It functions in the pathway secondary metabolite biosynthesis; terpenoid biosynthesis. Involved in the biosynthesis of macrocyclic lathyrane type diterpenoids (also called Euphorbia factors) natural products, including the cyclization route from casbene to jolkinol C, a precursor for ingenol mebutate that is used to treat actinic keratosis, a precancerous skin condition. Catalyzes the hydroxylation of (-)-casbene and 8-hydroxycasbene to produce 4-hydroxycasbene and 4,8-dihydroxycasbene, respectively. This chain is Cytochrome P450 726A27, found in Euphorbia lathyris (Caper spurge).